The primary structure comprises 189 residues: 3-isopropylmalate dehydratase small subunit (189 aa).

This sequence belongs to the LeuD family. LeuD type 1 subfamily. Heterodimer of LeuC and LeuD.

It catalyses the reaction (2R,3S)-3-isopropylmalate = (2S)-2-isopropylmalate. It functions in the pathway amino-acid biosynthesis; L-leucine biosynthesis; L-leucine from 3-methyl-2-oxobutanoate: step 2/4. Catalyzes the isomerization between 2-isopropylmalate and 3-isopropylmalate, via the formation of 2-isopropylmaleate. The polypeptide is 3-isopropylmalate dehydratase small subunit (Francisella philomiragia subsp. philomiragia (strain ATCC 25017 / CCUG 19701 / FSC 153 / O#319-036)).